Consider the following 387-residue polypeptide: Yellow-related salivary protein ASP2 (387 aa).

The first 18 residues, 1–18 (MKIFLCLIVVVSLQGVLA), serve as a signal peptide directing secretion.

The protein belongs to the major royal jelly protein family. In terms of tissue distribution, female salivary gland (at protein level).

It localises to the secreted. In terms of biological role, probably modulates blood feeding of sand flies on vertebrate species by binding and sequestering different mediators involved in the host response. Binds biogenic amines. Binds octopamine with high affinity. Binds serotonin and dopamine with medium affinity. Poorly binds histamine. Does not bind noradrenaline and adrenaline. This is Yellow-related salivary protein ASP2 from Phlebotomus orientalis (Phlebotomine sand fly).